The sequence spans 626 residues: DNA polymerase 2 (626 aa).

It belongs to the DNA polymerase type-B family.

The enzyme catalyses DNA(n) + a 2'-deoxyribonucleoside 5'-triphosphate = DNA(n+1) + diphosphate. This polymerase is devoid of exonuclease activity. This chain is DNA polymerase 2 (dpo2), found in Saccharolobus solfataricus (strain ATCC 35092 / DSM 1617 / JCM 11322 / P2) (Sulfolobus solfataricus).